Here is an 881-residue protein sequence, read N- to C-terminus: Ribonucleoside-diphosphate reductase large subunit (881 aa).

The ATP-cone domain occupies 69-160 (TIYLDHNGSI…MTNLHDNTSD (92 aa)). Residues Thr271, 286 to 287 (SC), Gly315, 493 to 497 (NLCCE), and 675 to 679 (PTAST) each bind substrate. A disulfide bridge links Cys287 with Cys510. Asn493 (proton acceptor) is an active-site residue. Cys495 functions as the Cysteine radical intermediate in the catalytic mechanism. The Proton acceptor role is filled by Glu497.

It belongs to the ribonucleoside diphosphate reductase large chain family. Heterotetramer composed of a homodimer of the large subunit (R1) and a homodimer of the small subunit (R2). Larger multisubunit protein complex are also active, composed of (R1)n(R2)n.

The enzyme catalyses a 2'-deoxyribonucleoside 5'-diphosphate + [thioredoxin]-disulfide + H2O = a ribonucleoside 5'-diphosphate + [thioredoxin]-dithiol. Under complex allosteric control mediated by deoxynucleoside triphosphates and ATP binding. The type of nucleotide bound at the specificity site determines substrate preference. It seems probable that ATP makes the enzyme reduce CDP and UDP, dGTP favors ADP reduction and dTTP favors GDP reduction. In terms of biological role, ribonucleoside-diphosphate reductase holoenzyme provides the precursors necessary for viral DNA synthesis. Allows virus growth in non-dividing cells. Catalyzes the biosynthesis of deoxyribonucleotides from the corresponding ribonucleotides. This is Ribonucleoside-diphosphate reductase large subunit (RNR1) from Acanthamoeba polyphaga mimivirus (APMV).